A 107-amino-acid chain; its full sequence is MINVDPPTGNYPATGGNSTHNITSESDSRLAFKVKSSNNEHYRVRPVYGFVDAKGKSKLDINRLPGPPKEDKIVIQYAEVPAEETDPMAPFKAGAQQGEIIVKLIAA.

Positions 1-26 (MINVDPPTGNYPATGGNSTHNITSES) are disordered. An MSP domain is found at 1 to 107 (MINVDPPTGN…GEIIVKLIAA (107 aa)). A compositionally biased stretch (polar residues) spans 15-25 (GGNSTHNITSE).

In terms of tissue distribution, expressed at higher level in testis.

The sequence is that of Sperm-specific class P protein 34 (ssp-34) from Caenorhabditis elegans.